The following is an 85-amino-acid chain: uncharacterized protein (85 aa).

The segment at 35-85 (SDKDAPFSTQALTRSKSKRKRSALPVANGLKKPTRSIKRPSRGERLSATTI) is disordered.

This is an uncharacterized protein from Pasteurella multocida (strain Pm70).